The chain runs to 746 residues: Rhizobactin receptor (746 aa).

Residues 1–26 (MGNNENGGISFCVFVVVIGFGTGAVA) form the signal peptide. Positions 40–47 (EEIVVTGG) match the TonB box motif. Residues 52–163 (QISEIARTIY…TGGIINIITK (112 aa)) enclose the TBDR plug domain. One can recognise a TBDR beta-barrel domain in the interval 169 to 746 (EPGLHAEVTG…TFAVSLTKVF (578 aa)). The TonB C-terminal box motif lies at 729–746 (FDYKGRGRTFAVSLTKVF).

The protein belongs to the TonB-dependent receptor family.

It localises to the cell outer membrane. Receptor for the siderophore rhizobactin. This chain is Rhizobactin receptor (rhtA), found in Rhizobium meliloti (strain 1021) (Ensifer meliloti).